The primary structure comprises 634 residues: DNA-directed RNA polymerase subunit gamma (634 aa).

Zn(2+) contacts are provided by C74, C76, C89, and C92. D471, D473, and D475 together coordinate Mg(2+).

The protein belongs to the RNA polymerase beta' chain family. RpoC1 subfamily. As to quaternary structure, in cyanobacteria the RNAP catalytic core is composed of 2 alpha, 1 beta, 1 beta', 1 gamma and 1 omega subunit. When a sigma factor is associated with the core the holoenzyme is formed, which can initiate transcription. Requires Mg(2+) as cofactor. It depends on Zn(2+) as a cofactor.

The enzyme catalyses RNA(n) + a ribonucleoside 5'-triphosphate = RNA(n+1) + diphosphate. DNA-dependent RNA polymerase catalyzes the transcription of DNA into RNA using the four ribonucleoside triphosphates as substrates. The chain is DNA-directed RNA polymerase subunit gamma from Prochlorococcus marinus (strain SARG / CCMP1375 / SS120).